Consider the following 95-residue polypeptide: Large ribosomal subunit protein bL25 (95 aa).

This sequence belongs to the bacterial ribosomal protein bL25 family. As to quaternary structure, part of the 50S ribosomal subunit; part of the 5S rRNA/L5/L18/L25 subcomplex. Contacts the 5S rRNA. Binds to the 5S rRNA independently of L5 and L18.

In terms of biological role, this is one of the proteins that binds to the 5S RNA in the ribosome where it forms part of the central protuberance. The chain is Large ribosomal subunit protein bL25 from Buchnera aphidicola subsp. Acyrthosiphon pisum (strain 5A).